We begin with the raw amino-acid sequence, 205 residues long: MLAALEMKSSPTAPPAYAAIPSTNAALSVLQNAVASGTGANEVMRNEKAAYGAATEVLKDDETTRMLKMQVNEYSLAEMRAAYQKLKRQSRLLHYGELLCLALVLGLTFTLMASSTAAVLQSALQQVGITGHVVTGILTSLAIFLQHHRTRVLKRKRSVKRDIVKRMTYISLARRMGTRSPETGCRKVTSGLPHGASGGSGTRQG.

The interval 177-205 (GTRSPETGCRKVTSGLPHGASGGSGTRQG) is disordered. Residues 196–205 (ASGGSGTRQG) are compositionally biased toward gly residues.

This sequence belongs to the orbivirus NS3 family.

In terms of biological role, may play a role in the release of virions from infected cells. The polypeptide is Non-structural protein NS3 (Segment-10) (Broadhaven virus (BRD)).